A 123-amino-acid chain; its full sequence is Small ribosomal subunit protein uS12cz/uS12cy (123 aa).

The protein belongs to the universal ribosomal protein uS12 family. In terms of assembly, part of the 30S ribosomal subunit.

The protein localises to the plastid. Its subcellular location is the chloroplast. In terms of biological role, with S4 and S5 plays an important role in translational accuracy. Located at the interface of the 30S and 50S subunits. This chain is Small ribosomal subunit protein uS12cz/uS12cy (rps12-A), found in Eucalyptus globulus subsp. globulus (Tasmanian blue gum).